The sequence spans 341 residues: tRNA N6-adenosine threonylcarbamoyltransferase (341 aa).

2 residues coordinate Fe cation: His-115 and His-119. Substrate-binding positions include 138–142, Asp-171, Gly-184, and Asn-276; that span reads LVSGG. Position 304 (Asp-304) interacts with Fe cation.

The protein belongs to the KAE1 / TsaD family. Fe(2+) is required as a cofactor.

It is found in the cytoplasm. The catalysed reaction is L-threonylcarbamoyladenylate + adenosine(37) in tRNA = N(6)-L-threonylcarbamoyladenosine(37) in tRNA + AMP + H(+). Its function is as follows. Required for the formation of a threonylcarbamoyl group on adenosine at position 37 (t(6)A37) in tRNAs that read codons beginning with adenine. Is involved in the transfer of the threonylcarbamoyl moiety of threonylcarbamoyl-AMP (TC-AMP) to the N6 group of A37, together with TsaE and TsaB. TsaD likely plays a direct catalytic role in this reaction. The polypeptide is tRNA N6-adenosine threonylcarbamoyltransferase (Stenotrophomonas maltophilia (strain R551-3)).